The primary structure comprises 918 residues: Isoleucine--tRNA ligase (918 aa).

The 'HIGH' region signature appears at P59–H69. L-isoleucyl-5'-AMP is bound at residue E570. Residues K611–S615 carry the 'KMSKS' region motif. K614 provides a ligand contact to ATP. C893, C896, C908, and C911 together coordinate Zn(2+).

This sequence belongs to the class-I aminoacyl-tRNA synthetase family. IleS type 1 subfamily. As to quaternary structure, monomer. The cofactor is Zn(2+).

Its subcellular location is the cytoplasm. The catalysed reaction is tRNA(Ile) + L-isoleucine + ATP = L-isoleucyl-tRNA(Ile) + AMP + diphosphate. Its function is as follows. Catalyzes the attachment of isoleucine to tRNA(Ile). As IleRS can inadvertently accommodate and process structurally similar amino acids such as valine, to avoid such errors it has two additional distinct tRNA(Ile)-dependent editing activities. One activity is designated as 'pretransfer' editing and involves the hydrolysis of activated Val-AMP. The other activity is designated 'posttransfer' editing and involves deacylation of mischarged Val-tRNA(Ile). The chain is Isoleucine--tRNA ligase from Campylobacter concisus (strain 13826).